The primary structure comprises 32 residues: Apolipophorin-3 (32 aa).

A disordered region spans residues 1–32 (DAPSTTPPQDXEKKAAEFQKTFTEQXNQLANK). Residues 20 to 32 (KTFTEQXNQLANK) are compositionally biased toward polar residues.

It belongs to the insect apolipophorin-3 family. Equilibrium between a soluble monomer and a bound lipoprotein form. Apolipophorin-3 associates with lipophorin during lipid loading until each particle contains 9 or 14 molecules of apolipophorin-3. As to expression, hemolymph.

It localises to the secreted. Its function is as follows. Assists in the loading of diacylglycerol, generated from triacylglycerol stores in the fat body through the action of adipokinetic hormone, into lipophorin, the hemolymph lipoprotein. It increases the lipid carrying capacity of lipophorin by covering the expanding hydrophobic surface resulting from diacylglycerol uptake. It thus plays a critical role in the transport of lipids during flight in several species of insects. This is Apolipophorin-3 from Diatraea grandiosella (Southwestern corn borer).